The sequence spans 989 residues: Voltage-gated delayed rectifier potassium channel KCNH1 (989 aa).

Residues 1–220 (MTMAGGRRGL…LHYCVFKTTW (220 aa)) lie on the Cytoplasmic side of the membrane. The PAS domain maps to 14-94 (QNTFLENIVR…QTFENYEMNS (81 aa)). Positions 93 to 145 (NSFEILMYKKNRTPVWFFVKIAPIRNEQDKVVLFLCTFSDITAFKQPIEDDSC) constitute a PAC domain. Residues 151-162 (FARLTRALTSSR) form a required for phosphatidylinositol bisphosphate binding region. A helical transmembrane segment spans residues 221–241 (DWIILILTFYTAILVPYNVSF). At 242-248 (KTRQNNV) the chain is on the extracellular side. A helical membrane pass occupies residues 249–269 (AWLVVDSIVDVIFLVDIVLNF). Over 270-290 (HTTFVGPAGEVISDPKLIRMN) the chain is Cytoplasmic. Residues 291 to 309 (YLKTWFVIDLLSCLPYDVI) traverse the membrane as a helical segment. Residues 310 to 345 (NAFENVDEVSAFMGDPGKIGFADQIPPPLEGRESQG) are Extracellular-facing. The helical; Voltage-sensor transmembrane segment at 346–368 (ISSLFSSLKVVRLLRLGRVARKL) threads the bilayer. Topologically, residues 369 to 377 (DHYIEYGAA) are cytoplasmic. Residues 378–399 (VLVLLVCVFGLAAHWMACIWYS) traverse the membrane as a helical segment. At 400–448 (IGDYEIFDEDTKTIRNNSWLYQLAMDIGTPYQFNGSGSGKWEGGPSKNS) the chain is on the extracellular side. Asparagine 415 and asparagine 433 each carry an N-linked (GlcNAc...) asparagine glycan. Positions 449–470 (VYISSLYFTMTSLTSVGFGNIA) form an intramembrane region, pore-forming. The short motif at 463-468 (SVGFGN) is the Selectivity filter element. Over 471-477 (PSTDIEK) the chain is Extracellular. Residues 478–498 (IFAVAIMMIGSLLYATIFGNV) traverse the membrane as a helical segment. Residues 499–989 (TTIFQQMYAN…ESERDIFGAS (491 aa)) lie on the Cytoplasmic side of the membrane. A calmodulin-binding region spans residues 673–770 (KRDALQKVLE…LDDLDVEKGN (98 aa)). Positions 699–701 (YNL) are interaction with cyclic nucleotide-binding pocket. Residues 855–879 (KAESMETLPERTKASGEATLKKTDS) are compositionally biased toward basic and acidic residues. Disordered stretches follow at residues 855–886 (KAES…GITK) and 962–989 (RSSQ…FGAS). The interval 924-964 (ATVLEVRHELKEDIKALNAKMTNIEKQLSEILRILTSRRSS) is CAD (involved in subunit assembly). Phosphoserine occurs at positions 974, 978, and 981. Over residues 980–989 (ESERDIFGAS) the composition is skewed to basic and acidic residues.

Belongs to the potassium channel family. H (Eag) (TC 1.A.1.20) subfamily. Kv10.1/KCNH1 sub-subfamily. In terms of assembly, homomultimer. The potassium channel is composed of a homo- or heterotetrameric complex of pore-forming alpha subunits that can associate with modulating beta subunits. Heteromultimer with KCNH5/EAG2. Interacts with ALG10B. Interacts with RABEP1. Interacts (via C-terminus) with CTTN. Interacts (via C-terminal cytoplasmic region) with Ca(2+)-bound calmodulin. Interacts with the spider kappa-theraphotoxin-Aa1a and mu/kappa-theraphotoxin-Ap1a. Channel activity is regulated via tyrosine phosphorylation/dephosphorylation by SRC and PTPN6. As to expression, highly expressed in brain and in myoblasts at the onset of fusion, but not in other tissues. Detected in HeLa (cervical carcinoma), SH-SY5Y (neuroblastoma) and MCF-7 (epithelial tumor) cells, but not in normal epithelial cells.

Its subcellular location is the cell membrane. The protein localises to the nucleus inner membrane. It is found in the cell projection. It localises to the dendrite. The protein resides in the axon. Its subcellular location is the presynaptic cell membrane. The protein localises to the perikaryon. It is found in the postsynaptic density membrane. It localises to the early endosome membrane. It catalyses the reaction K(+)(in) = K(+)(out). Channel activity is inhibited by interaction with Ca(2+)-bound calmodulin. Interaction of a single pore-forming alpha subunit with a calmodulin chain is sufficient to promote channel closure. Channel activity is not regulated by cyclic nucleotides. Channel activity is inhibited by binding intracellular phosphatidylinositol-3,5-bisphosphate and phosphatidylinositol-4,5-bisphosphate (PIP2), but is not inhibited by phosphatidylinositol 4-phosphate. Inhibited by the spider kappa-theraphotoxin-Aa1a and mu/kappa-theraphotoxin-Ap1a. Functionally, pore-forming (alpha) subunit of a voltage-gated delayed rectifier potassium channel that mediates outward-rectifying potassium currents which, on depolarization, reaches a steady-state level and do not inactivate. The activation kinetics depend on the prepulse potential and external divalent cation concentration. With negative prepulses, the current activation is delayed and slowed down several fold, whereas more positive prepulses speed up activation. The time course of activation is biphasic with a fast and a slowly activating current component. Activates at more positive membrane potentials and exhibit a steeper activation curve. Channel properties are modulated by subunit assembly. Mediates IK(NI) current in myoblasts. Involved in the regulation of cell proliferation and differentiation, in particular adipogenic and osteogenic differentiation in bone marrow-derived mesenchymal stem cells (MSCs). The polypeptide is Voltage-gated delayed rectifier potassium channel KCNH1 (Homo sapiens (Human)).